We begin with the raw amino-acid sequence, 165 residues long: Protein SprT (165 aa).

The region spanning 20-163 (EKLAQANLKL…RCVHCGEQLV (144 aa)) is the SprT-like domain. H78 provides a ligand contact to Zn(2+). Residue E79 is part of the active site. H82 is a Zn(2+) binding site.

This sequence belongs to the SprT family. The cofactor is Zn(2+).

It is found in the cytoplasm. This is Protein SprT from Escherichia coli O127:H6 (strain E2348/69 / EPEC).